A 958-amino-acid polypeptide reads, in one-letter code: Protein translocase subunit SecA (958 aa).

Residues Gln86, 104-108 (GEGKT), and Asp494 contribute to the ATP site. Disordered regions lie at residues 863–883 (AAATGESAPAEPETDDEAEKT) and 902–937 (QPISHAEGKVPANKRPKSEELHSPWADGRTFPGTGK). Zn(2+) contacts are provided by Cys941, Cys943, Cys952, and His953.

The protein belongs to the SecA family. As to quaternary structure, monomer and homodimer. Part of the essential Sec protein translocation apparatus which comprises SecA, SecYEG and auxiliary proteins SecDF. Other proteins may also be involved. Zn(2+) is required as a cofactor.

Its subcellular location is the cell membrane. It localises to the cytoplasm. It carries out the reaction ATP + H2O + cellular proteinSide 1 = ADP + phosphate + cellular proteinSide 2.. In terms of biological role, part of the Sec protein translocase complex. Interacts with the SecYEG preprotein conducting channel. Has a central role in coupling the hydrolysis of ATP to the transfer of proteins into and across the cell membrane, serving as an ATP-driven molecular motor driving the stepwise translocation of polypeptide chains across the membrane. This chain is Protein translocase subunit SecA, found in Bifidobacterium adolescentis (strain ATCC 15703 / DSM 20083 / NCTC 11814 / E194a).